Here is a 252-residue protein sequence, read N- to C-terminus: Tumor necrosis factor ligand superfamily member 15 (252 aa).

Over 1-39 (MAEELGLGFGEGVPVEVLPEGCRHRPEARAGLAARSKAC) the chain is Cytoplasmic. Residues 40 to 60 (LALTCCLLSFPILAGLSTLLM) traverse the membrane as a helical; Signal-anchor for type II membrane protein segment. The Extracellular portion of the chain corresponds to 61–252 (AGQLRVPGKD…DKTFFGAFLL (192 aa)). The region spanning 96 to 252 (PRAHLTIKKQ…DKTFFGAFLL (157 aa)) is the THD domain. Asn137 carries N-linked (GlcNAc...) asparagine glycosylation. A disulfide bridge connects residues Cys163 and Cys203. A glycan (N-linked (GlcNAc...) asparagine) is linked at Asn230.

This sequence belongs to the tumor necrosis factor family. Homotrimer.

The protein localises to the membrane. Functionally, receptor for TNFRSF25 and TNFRSF6B. Mediates activation of NF-kappa-B. Inhibits vascular endothelial growth and angiogenesis (in vitro). Promotes activation of caspases and apoptosis. Promotes splenocyte alloactivation. The sequence is that of Tumor necrosis factor ligand superfamily member 15 (Tnfsf15) from Mus musculus (Mouse).